The following is an 86-amino-acid chain: Probable weak neurotoxin NNAM1 (86 aa).

The first 21 residues, 1–21, serve as a signal peptide directing secretion; the sequence is MKTLLLSLVVVTIVCLDLGYT. 5 disulfides stabilise this stretch: Cys24/Cys45, Cys27/Cys32, Cys38/Cys63, Cys67/Cys78, and Cys79/Cys84.

This sequence belongs to the three-finger toxin family. Ancestral subfamily. Orphan group II sub-subfamily. As to expression, expressed by the venom gland.

The protein resides in the secreted. In terms of biological role, binds with low affinity to muscular (alpha-1-beta-1-delta-epsilon/CHRNA1-CHRNB1-CHRND-CHRNE) and very low affinity to neuronal (alpha-7/CHRNA7) nicotinic acetylcholine receptor (nAChR). The protein is Probable weak neurotoxin NNAM1 of Naja atra (Chinese cobra).